The following is a 307-amino-acid chain: Probable deoxyhypusine synthase (307 aa).

Residue lysine 278 is the Nucleophile of the active site.

The protein belongs to the deoxyhypusine synthase family. It depends on NAD(+) as a cofactor.

The catalysed reaction is [eIF5A protein]-L-lysine + spermidine = [eIF5A protein]-deoxyhypusine + propane-1,3-diamine. It participates in protein modification; eIF5A hypusination. In terms of biological role, catalyzes the NAD-dependent oxidative cleavage of spermidine and the subsequent transfer of the butylamine moiety of spermidine to the epsilon-amino group of a specific lysine residue of the eIF-5A precursor protein to form the intermediate deoxyhypusine residue. This Methanothermobacter thermautotrophicus (strain ATCC 29096 / DSM 1053 / JCM 10044 / NBRC 100330 / Delta H) (Methanobacterium thermoautotrophicum) protein is Probable deoxyhypusine synthase (dys).